The chain runs to 463 residues: L-2-hydroxyglutarate dehydrogenase, mitochondrial (463 aa).

Residues 1-51 constitute a mitochondrion transit peptide; the sequence is MVPALRYLVGACGRARGLFAGGSPGACGFASGRPRPLCGGSRSASTSSFDI. 3 positions are modified to N6-acetyllysine: Lys-104, Lys-155, and Lys-173.

Belongs to the L2HGDH family. FAD is required as a cofactor. As to expression, widely expressed. Highly expressed in brain, testis and muscle. Expressed to a lower extent in lymphocytes, fibroblasts, keratinocytes, placenta, bladder, small intestine, liver and bone marrow.

The protein resides in the mitochondrion. The enzyme catalyses (S)-2-hydroxyglutarate + A = 2-oxoglutarate + AH2. The polypeptide is L-2-hydroxyglutarate dehydrogenase, mitochondrial (L2HGDH) (Homo sapiens (Human)).